Consider the following 219-residue polypeptide: MFGFLKQVGDYTRDAVDAARNLTQGLSVTFDHMKRRPVTVQYPYEKLIPSERYRGRIHYEFDKCIACEVCVRVCPINLPVVDWVMNKETKKKELRNYSIDFGVCIFCGNCVEYCPTNCLSMTEEYELAAFDRHSLNYDNVALGRLPTSVTTDPSVQPLRELVYLPAGEVQPHGVSPDRPRAGKLPEQILEELKAAGSMKAAEDERESSSSASNMEESAG.

4Fe-4S ferredoxin-type domains are found at residues Gly55–Val84 and Arg95–Glu124. Positions 64, 67, 70, 74, 104, 107, 110, and 114 each coordinate [4Fe-4S] cluster. The disordered stretch occupies residues Leu192–Gly219. The segment covering Ser208 to Gly219 has biased composition (low complexity).

The protein belongs to the complex I 23 kDa subunit family. As to quaternary structure, NDH-1 is composed of at least 11 different subunits. Requires [4Fe-4S] cluster as cofactor.

The protein resides in the cellular thylakoid membrane. It carries out the reaction a plastoquinone + NADH + (n+1) H(+)(in) = a plastoquinol + NAD(+) + n H(+)(out). It catalyses the reaction a plastoquinone + NADPH + (n+1) H(+)(in) = a plastoquinol + NADP(+) + n H(+)(out). In terms of biological role, NDH-1 shuttles electrons from an unknown electron donor, via FMN and iron-sulfur (Fe-S) centers, to quinones in the respiratory and/or the photosynthetic chain. The immediate electron acceptor for the enzyme in this species is believed to be plastoquinone. Couples the redox reaction to proton translocation, and thus conserves the redox energy in a proton gradient. The protein is NAD(P)H-quinone oxidoreductase subunit I of Synechococcus sp. (strain CC9311).